The primary structure comprises 172 residues: Translation initiation factor IF-3 (172 aa).

This sequence belongs to the IF-3 family. As to quaternary structure, monomer.

The protein localises to the cytoplasm. In terms of biological role, IF-3 binds to the 30S ribosomal subunit and shifts the equilibrium between 70S ribosomes and their 50S and 30S subunits in favor of the free subunits, thus enhancing the availability of 30S subunits on which protein synthesis initiation begins. The sequence is that of Translation initiation factor IF-3 from Geobacter metallireducens (strain ATCC 53774 / DSM 7210 / GS-15).